Reading from the N-terminus, the 269-residue chain is Myelin protein zero-like protein 1 (269 aa).

An N-terminal signal peptide occupies residues 1-35; that stretch reads MAAPAGAGALIASPDRRRCLWSVLAAALGLLTYGV. Positions 36–146 constitute an Ig-like V-type domain; that stretch reads SALEVYTPKE…VKNPPDIVVQ (111 aa). Residues 36-162 lie on the Extracellular side of the membrane; the sequence is SALEVYTPKE…YVVEKEILPA (127 aa). N-linked (GlcNAc...) asparagine glycans are attached at residues Asn-50, Asn-64, and Asn-130. A disulfide bond links Cys-58 and Cys-135. A helical transmembrane segment spans residues 163-183; the sequence is FPVWVVVGIVTAVVLGLTLLI. The Cytoplasmic segment spans residues 184-269; that stretch reads TMILAVIYRR…SVVYADIRKN (86 aa). The interval 202-238 is disordered; sequence GCNTSENVSPVKQVSRKSPSDTEGLVKSLPSGSHQGP. A compositionally biased stretch (polar residues) spans 203 to 213; the sequence is CNTSENVSPVK. Phosphoserine is present on residues Ser-206, Ser-210, Ser-219, and Ser-221. The ITIM motif 1 motif lies at 239–244; that stretch reads VIYAQL. Position 241 is a phosphotyrosine (Tyr-241). Position 260 is a phosphoserine (Ser-260). Positions 261–266 match the ITIM motif 2 motif; sequence VVYADI. Tyr-263 is modified (phosphotyrosine).

It belongs to the myelin P0 protein family. As to quaternary structure, interacts with phosphorylated PTPN11/SHP-2. Post-translationally, phosphorylated on tyrosine residues upon stimulation with pervanadate and concanavalin-A (ConA). Phosphorylation at Tyr-241 and Tyr-263 is required for interaction with PTPN11/SHP-2. Dephosphorylated by PTPN11/SHP-2 (in vitro). In terms of processing, N-glycosylated.

Its subcellular location is the membrane. Its function is as follows. Cell surface receptor, which is involved in signal transduction processes. Recruits PTPN11/SHP-2 to the cell membrane and is a putative substrate of PTPN11/SHP-2. Is a major receptor for concanavalin-A (ConA) and is involved in cellular signaling induced by ConA, which probably includes Src family tyrosine-protein kinases. May be involved in regulation of integrin-mediated cell motility. The chain is Myelin protein zero-like protein 1 (MPZL1) from Bos taurus (Bovine).